Consider the following 375-residue polypeptide: Queuine tRNA-ribosyltransferase (375 aa).

Catalysis depends on Asp-89, which acts as the Proton acceptor. Substrate contacts are provided by residues 89-93, Asp-143, Gln-185, and Gly-212; that span reads DSGGF. The tract at residues 243-249 is RNA binding; the sequence is GVGKPED. Catalysis depends on Asp-262, which acts as the Nucleophile. The RNA binding; important for wobble base 34 recognition stretch occupies residues 267-271; it reads TRNAR. The Zn(2+) site is built by Cys-300, Cys-302, Cys-305, and His-331.

It belongs to the queuine tRNA-ribosyltransferase family. As to quaternary structure, homodimer. Within each dimer, one monomer is responsible for RNA recognition and catalysis, while the other monomer binds to the replacement base PreQ1. The cofactor is Zn(2+).

The enzyme catalyses 7-aminomethyl-7-carbaguanine + guanosine(34) in tRNA = 7-aminomethyl-7-carbaguanosine(34) in tRNA + guanine. It participates in tRNA modification; tRNA-queuosine biosynthesis. Its function is as follows. Catalyzes the base-exchange of a guanine (G) residue with the queuine precursor 7-aminomethyl-7-deazaguanine (PreQ1) at position 34 (anticodon wobble position) in tRNAs with GU(N) anticodons (tRNA-Asp, -Asn, -His and -Tyr). Catalysis occurs through a double-displacement mechanism. The nucleophile active site attacks the C1' of nucleotide 34 to detach the guanine base from the RNA, forming a covalent enzyme-RNA intermediate. The proton acceptor active site deprotonates the incoming PreQ1, allowing a nucleophilic attack on the C1' of the ribose to form the product. After dissociation, two additional enzymatic reactions on the tRNA convert PreQ1 to queuine (Q), resulting in the hypermodified nucleoside queuosine (7-(((4,5-cis-dihydroxy-2-cyclopenten-1-yl)amino)methyl)-7-deazaguanosine). The sequence is that of Queuine tRNA-ribosyltransferase from Pseudoalteromonas translucida (strain TAC 125).